Reading from the N-terminus, the 183-residue chain is Nodulation protein L (183 aa).

Belongs to the transferase hexapeptide repeat family.

In terms of biological role, acetyltransferase implicated in the O-acetylation of Nod factors. In Rhizobium meliloti (strain 1021) (Ensifer meliloti), this protein is Nodulation protein L (nodL).